Reading from the N-terminus, the 644-residue chain is Interleukin-23 receptor (644 aa).

The first 23 residues, Met1 to Gly23, serve as a signal peptide directing secretion. The Extracellular portion of the chain corresponds to Gly24–Gly374. N-linked (GlcNAc...) asparagine glycans are attached at residues Asn47, Asn130, and Asn232. Fibronectin type-III domains follow at residues Ala127–Ile217 and Ile219–Glu318. The helical transmembrane segment at Leu375–Phe395 threads the bilayer. The Cytoplasmic segment spans residues Asn396–Lys644.

Belongs to the type I cytokine receptor family. Type 2 subfamily. As to quaternary structure, heterodimer with IL12RB1. In presence of IL23, the heterodimer forms the IL23 receptor. Interacts with JAK2 and in presence of IL23 with STAT3. Phosphorylated in response to IL23. Expressed by Th1, Th2 and dendritic cells.

Its subcellular location is the cell membrane. Its function is as follows. Associates with IL12RB1 to form the interleukin-23 receptor. Binds IL23 and mediates T-cells, NK cells and possibly certain macrophage/myeloid cells stimulation probably through activation of the Jak-Stat signaling cascade. IL23 functions in innate and adaptive immunity and may participate in acute response to infection in peripheral tissues. IL23 may be responsible for autoimmune inflammatory diseases and be important for tumorigenesis. The sequence is that of Interleukin-23 receptor (Il23r) from Mus musculus (Mouse).